The primary structure comprises 407 residues: 5-aminolevulinate synthase 2 (407 aa).

Arg-21 and Ser-137 together coordinate substrate. Residues Ser-189, His-217, and Thr-245 each coordinate pyridoxal 5'-phosphate. Residue Lys-248 is part of the active site. Lys-248 carries the post-translational modification N6-(pyridoxal phosphate)lysine. Pyridoxal 5'-phosphate is bound by residues Thr-277 and Thr-278. Thr-363 is a substrate binding site.

Belongs to the class-II pyridoxal-phosphate-dependent aminotransferase family. In terms of assembly, homodimer. Requires pyridoxal 5'-phosphate as cofactor.

It catalyses the reaction succinyl-CoA + glycine + H(+) = 5-aminolevulinate + CO2 + CoA. It functions in the pathway porphyrin-containing compound metabolism; protoporphyrin-IX biosynthesis; 5-aminolevulinate from glycine: step 1/1. In Cereibacter sphaeroides (strain ATCC 17023 / DSM 158 / JCM 6121 / CCUG 31486 / LMG 2827 / NBRC 12203 / NCIMB 8253 / ATH 2.4.1.) (Rhodobacter sphaeroides), this protein is 5-aminolevulinate synthase 2 (hemT).